The primary structure comprises 217 residues: Protein TNT (217 aa).

Positions 1 to 217 are disordered; the sequence is MSLVPGQHCS…HSTKQTGGKE (217 aa). 2 stretches are compositionally biased toward polar residues: residues 20–36 and 45–61; these read SPIT…TEFS and TSPQ…SQGP. 2 stretches are compositionally biased toward low complexity: residues 91-104 and 128-139; these read EPSL…LQSP and QSSESHVSSVQH. Composition is skewed to polar residues over residues 177-191 and 207-217; these read RLNT…SQLG and AHSTKQTGGKE.

Preferentially expressed in teratocarcinoma rather than in normal testis.

This Homo sapiens (Human) protein is Protein TNT (C16orf82).